Consider the following 155-residue polypeptide: S-ribosylhomocysteine lyase (155 aa).

The Fe cation site is built by His-53, His-57, and Cys-121.

It belongs to the LuxS family. In terms of assembly, homodimer. Requires Fe cation as cofactor.

The catalysed reaction is S-(5-deoxy-D-ribos-5-yl)-L-homocysteine = (S)-4,5-dihydroxypentane-2,3-dione + L-homocysteine. Functionally, involved in the synthesis of autoinducer 2 (AI-2) which is secreted by bacteria and is used to communicate both the cell density and the metabolic potential of the environment. The regulation of gene expression in response to changes in cell density is called quorum sensing. Catalyzes the transformation of S-ribosylhomocysteine (RHC) to homocysteine (HC) and 4,5-dihydroxy-2,3-pentadione (DPD). This chain is S-ribosylhomocysteine lyase, found in Thermus thermophilus (strain ATCC BAA-163 / DSM 7039 / HB27).